The primary structure comprises 396 residues: Acetate kinase (396 aa).

Position 7 (Asn7) interacts with Mg(2+). Lys14 provides a ligand contact to ATP. Residue Arg88 coordinates substrate. Catalysis depends on Asp145, which acts as the Proton donor/acceptor. Residues 203 to 207 (HAGNG), 278 to 280 (DAR), and 326 to 330 (GIGEN) each bind ATP. Glu379 is a binding site for Mg(2+).

The protein belongs to the acetokinase family. Homodimer. It depends on Mg(2+) as a cofactor. Requires Mn(2+) as cofactor.

It localises to the cytoplasm. It catalyses the reaction acetate + ATP = acetyl phosphate + ADP. It functions in the pathway metabolic intermediate biosynthesis; acetyl-CoA biosynthesis; acetyl-CoA from acetate: step 1/2. Its function is as follows. Catalyzes the formation of acetyl phosphate from acetate and ATP. Can also catalyze the reverse reaction. The sequence is that of Acetate kinase from Phytoplasma australiense.